Here is a 230-residue protein sequence, read N- to C-terminus: Sugar fermentation stimulation protein homolog (230 aa).

This sequence belongs to the SfsA family.

The chain is Sugar fermentation stimulation protein homolog from Clostridium botulinum (strain Alaska E43 / Type E3).